Here is a 186-residue protein sequence, read N- to C-terminus: MKTAHEIRPGNVIMLDGSPWVVQKTETTRSGRNAAIVKMKLKNLLQESSTETTFKGEDKMEDIILDRLDCTYSYFADPMYVFMDAEYNQYDVEADNLGDAAAYIVDGMEEQCQVTFYEGKAISVELPTTVVREVTYTEPSARGDTSGKVMKPATIAGGATLSVADFVKTGDLIEIDTRTHEFKKRA.

It belongs to the elongation factor P family.

It is found in the cytoplasm. The protein operates within protein biosynthesis; polypeptide chain elongation. Functionally, involved in peptide bond synthesis. Stimulates efficient translation and peptide-bond synthesis on native or reconstituted 70S ribosomes in vitro. Probably functions indirectly by altering the affinity of the ribosome for aminoacyl-tRNA, thus increasing their reactivity as acceptors for peptidyl transferase. The protein is Elongation factor P of Shewanella loihica (strain ATCC BAA-1088 / PV-4).